The primary structure comprises 615 residues: MNNLIKSKLELLPTSPGCYIHKDKNGTIIYVGKAKNLRNRVRSYFRGSHDTKTEALVSEIVDFEFIVTESNIEALLLEINLIKENKPKYNIMLKDDKSYPFIKITNERYPRLIITRQVKKDGGLYFGPYPDVGAANEIKRLLDRIFPFRKCTNPPSKVCFYYHIGQCMAHTICKKDEIYFKSMAQEVSDFLKGQDNKIIDELKGKMAAAAQTMEFERAAEYRDLIQAIGTLRTKQRVMAKDLQNRDVFGYYVDKGWMCVQVFFVRQGKLIERDVNLFPYFNDPDEDFLTYVGQFYQEKSHLVPNEVLIPQDIDEEAVKALVDSKILKPQRGEKKQLVNLAIKNARVSLEQKFNLLEKSVEKTQGAIENLGRLLQIPTPVRIESFDNSNIMGTSPVSAMVVFVNGKPSKKDYRKYKIKTVVGPDDYASMREVIRRRYGRVQREALTPPDLIVIDGGQGQVNIAKQVIQEELGLDIPIAGLQKNDKHQTHELLFGDPLEVVDLSRNSQEFFLLQRIQDEVHRFAITFHRQLRSKNSFSSQLDGIDGLGPKRKQNLMRHFKSLTKIKEASVDEIVEVGVPRAVAEAVQTKLNPQETEILLQVAEERVDYQTEGNHNKP.

The GIY-YIG domain occupies 14 to 91 (TSPGCYIHKD…IKENKPKYNI (78 aa)). In terms of domain architecture, UVR spans 196–231 (NKIIDELKGKMAAAAQTMEFERAAEYRDLIQAIGTL).

It belongs to the UvrC family. As to quaternary structure, interacts with UvrB in an incision complex.

Its subcellular location is the cytoplasm. The UvrABC repair system catalyzes the recognition and processing of DNA lesions. UvrC both incises the 5' and 3' sides of the lesion. The N-terminal half is responsible for the 3' incision and the C-terminal half is responsible for the 5' incision. This chain is UvrABC system protein C, found in Streptococcus pneumoniae (strain ATCC 700669 / Spain 23F-1).